The primary structure comprises 170 residues: Translationally-controlled tumor protein homolog (170 aa).

The region spanning 1–170 (MIIYKCIISG…FKDGLLAEKC (170 aa)) is the TCTP domain.

Belongs to the TCTP family.

It localises to the cytoplasm. Involved in calcium binding and microtubule stabilization. The chain is Translationally-controlled tumor protein homolog (tpt1) from Lateolabrax japonicus (Japanese sea perch).